The primary structure comprises 150 residues: Leukotriene C4 synthase (150 aa).

At 1–6 (MKEETA) the chain is on the cytoplasmic side. Residues 7 to 27 (LLATVTLLGVLLQAYFSLQVI) form a helical membrane-spanning segment. The Lumenal segment spans residues 28 to 48 (SARRTFHVSPPLTSGPPEFER). Arg30 is a glutathione binding site. The active-site Proton donor is Arg31. At Ser36 the chain carries Phosphoserine. A helical membrane pass occupies residues 49 to 69 (VFRAQVNCSEYFPLFLATLWV). Glutathione is bound by residues 51-55 (RAQVN) and 58-59 (EY). At 70-73 (AGIF) the chain is on the cytoplasmic side. The chain crosses the membrane as a helical span at residues 74 to 94 (FHEGAAALCGLFYLFARLRYF). 93-97 (YFQGY) provides a ligand contact to glutathione. Residues 95–104 (QGYARSAQHR) are Lumenal-facing. The Proton acceptor role is filled by Arg104. A helical membrane pass occupies residues 105 to 124 (LDPLYASARALWLLVAMAAL). Residues 125 to 150 (GLLVHFLPGTLRAALFRWLQVLLPMA) lie on the Cytoplasmic side of the membrane.

It belongs to the MAPEG family. As to quaternary structure, homotrimer. Interacts with ALOX5AP and ALOX5. In terms of processing, phosphorylation at Ser-36 by RPS6KB1 inhibits the leukotriene-C4 synthase activity.

It localises to the nucleus outer membrane. The protein localises to the endoplasmic reticulum membrane. Its subcellular location is the nucleus membrane. The enzyme catalyses leukotriene C4 = leukotriene A4 + glutathione. It catalyses the reaction (13S,14S)-epoxy-(4Z,7Z,9E,11E,16Z,19Z)-docosahexaenoate + glutathione = (13R)-S-glutathionyl-(14S)-hydroxy-(4Z,7Z,9E,11E,16Z,19Z)-docosahexaenoate. It participates in lipid metabolism; leukotriene C4 biosynthesis. Inhibited by MK886. In terms of biological role, catalyzes the conjugation of leukotriene A4 with reduced glutathione (GSH) to form leukotriene C4 with high specificity. Can also catalyze the transfer of a glutathionyl group from glutathione (GSH) to 13(S),14(S)-epoxy-docosahexaenoic acid to form maresin conjugate in tissue regeneration 1 (MCTR1), a bioactive lipid mediator that possess potent anti-inflammatory and proresolving actions. The protein is Leukotriene C4 synthase (Ltc4s) of Rattus norvegicus (Rat).